A 329-amino-acid polypeptide reads, in one-letter code: Ankyrin repeat and SOCS box protein 5 (329 aa).

ANK repeat units lie at residues 69–98, 102–131, 135–164, 167–196, 200–229, and 232–261; these read ADRSPLHEAASQGRLLALRTLLSQGYNVNA, DHVTPLHEACLGDHVACARTLLEAGANVNA, DGVTPLFNACSQGSPSCAELLLEYGAKAQL, CLPSPTHEAASKGHHECLDILISWGIDVDQ, HLGTPLYVACMSQQFHCIWKLLYAGADVQK, and YWDTPLHAAAQQSSTEIVNLLLEFGADINA. Residues 278–329 enclose the SOCS box domain; that stretch reads MVERILLQHEATPSSLYQLCRLCIRSYIGKPRLHLIPQLQLPTLLKNFLQYR.

The protein belongs to the ankyrin SOCS box (ASB) family.

It functions in the pathway protein modification; protein ubiquitination. In terms of biological role, may be a substrate-recognition component of a SCF-like ECS (Elongin-Cullin-SOCS-box protein) E3 ubiquitin-protein ligase complex which mediates the ubiquitination and subsequent proteasomal degradation of target proteins. May play a role in the initiation of arteriogenesis. This is Ankyrin repeat and SOCS box protein 5 (ASB5) from Homo sapiens (Human).